A 392-amino-acid chain; its full sequence is Galactose-1-phosphate uridylyltransferase (392 aa).

Residues Cys-52 and Cys-55 each contribute to the Zn(2+) site. UDP-alpha-D-glucose contacts are provided by residues Ala-61 and 77-78 (ND). A Zn(2+)-binding site is contributed by His-126. Asn-194 serves as a coordination point for UDP-alpha-D-glucose. A Zn(2+)-binding site is contributed by His-205. The active-site Tele-UMP-histidine intermediate is His-207. Residue Gln-209 coordinates UDP-alpha-D-glucose. 4 residues coordinate Fe cation: Glu-223, His-323, His-340, and His-342. UDP-alpha-D-glucose is bound by residues 355–358 (KFLV) and 360–361 (YE).

This sequence belongs to the galactose-1-phosphate uridylyltransferase type 1 family. As to quaternary structure, homodimer. Requires Zn(2+) as cofactor.

It catalyses the reaction alpha-D-galactose 1-phosphate + UDP-alpha-D-glucose = alpha-D-glucose 1-phosphate + UDP-alpha-D-galactose. It functions in the pathway carbohydrate metabolism; galactose metabolism. This is Galactose-1-phosphate uridylyltransferase (gal-7) from Neurospora crassa (strain ATCC 24698 / 74-OR23-1A / CBS 708.71 / DSM 1257 / FGSC 987).